A 474-amino-acid chain; its full sequence is ATP synthase subunit beta 2 (474 aa).

156–163 (GGAGVGKT) is an ATP binding site.

It belongs to the ATPase alpha/beta chains family. As to quaternary structure, F-type ATPases have 2 components, CF(1) - the catalytic core - and CF(0) - the membrane proton channel. CF(1) has five subunits: alpha(3), beta(3), gamma(1), delta(1), epsilon(1). CF(0) has three main subunits: a(1), b(2) and c(9-12). The alpha and beta chains form an alternating ring which encloses part of the gamma chain. CF(1) is attached to CF(0) by a central stalk formed by the gamma and epsilon chains, while a peripheral stalk is formed by the delta and b chains.

Its subcellular location is the cell inner membrane. The catalysed reaction is ATP + H2O + 4 H(+)(in) = ADP + phosphate + 5 H(+)(out). Produces ATP from ADP in the presence of a proton gradient across the membrane. The catalytic sites are hosted primarily by the beta subunits. This chain is ATP synthase subunit beta 2, found in Shewanella frigidimarina (strain NCIMB 400).